The following is a 226-amino-acid chain: 2-C-methyl-D-erythritol 4-phosphate cytidylyltransferase (226 aa).

The protein belongs to the IspD/TarI cytidylyltransferase family. IspD subfamily.

The catalysed reaction is 2-C-methyl-D-erythritol 4-phosphate + CTP + H(+) = 4-CDP-2-C-methyl-D-erythritol + diphosphate. Its pathway is isoprenoid biosynthesis; isopentenyl diphosphate biosynthesis via DXP pathway; isopentenyl diphosphate from 1-deoxy-D-xylulose 5-phosphate: step 2/6. Functionally, catalyzes the formation of 4-diphosphocytidyl-2-C-methyl-D-erythritol from CTP and 2-C-methyl-D-erythritol 4-phosphate (MEP). This chain is 2-C-methyl-D-erythritol 4-phosphate cytidylyltransferase, found in Microcystis aeruginosa (strain NIES-843 / IAM M-2473).